The sequence spans 80 residues: Putative membrane protein insertion efficiency factor (80 aa).

Residues 60–80 form a disordered region; sequence SKTGKDPVPDRFSLKRNQEGE. Positions 62–80 are enriched in basic and acidic residues; it reads TGKDPVPDRFSLKRNQEGE.

This sequence belongs to the UPF0161 family.

It is found in the cell membrane. Functionally, could be involved in insertion of integral membrane proteins into the membrane. The chain is Putative membrane protein insertion efficiency factor from Streptococcus pneumoniae serotype 4 (strain ATCC BAA-334 / TIGR4).